Consider the following 224-residue polypeptide: Small ribosomal subunit protein eS1 (224 aa).

It belongs to the eukaryotic ribosomal protein eS1 family.

The chain is Small ribosomal subunit protein eS1 from Methanococcus maripaludis (strain C7 / ATCC BAA-1331).